We begin with the raw amino-acid sequence, 240 residues long: Acyl-coenzyme A thioesterase THEM4 (240 aa).

The transit peptide at methionine 1–phenylalanine 36 directs the protein to the mitochondrion. 2 positions are modified to phosphoserine: serine 37 and serine 38. 2 positions are modified to N6-succinyllysine: lysine 55 and lysine 66. At lysine 74 the chain carries N6-acetyllysine. Lysine 98 carries the post-translational modification N6-succinyllysine. The active-site Proton donor/acceptor is aspartate 161. Substrate contacts are provided by residues asparagine 183, lysine 185, and arginine 206–lysine 207. Lysine 207 bears the N6-succinyllysine mark.

Belongs to the THEM4/THEM5 thioesterase family. In terms of assembly, homodimer and homotetramer. Interacts with AKT1 in the cytosol. Phosphorylated. In terms of tissue distribution, expressed predominantly in skeletal muscle, testis, uterus, brain and kidney. Down-regulated in glioblastoma or glioma compared to non-neoplastic brain due to promoter hypermethylation.

The protein localises to the cell membrane. Its subcellular location is the cell projection. It is found in the ruffle membrane. The protein resides in the cytoplasm. It localises to the mitochondrion. The protein localises to the mitochondrion inner membrane. Its subcellular location is the mitochondrion intermembrane space. The catalysed reaction is hexadecanoyl-CoA + H2O = hexadecanoate + CoA + H(+). It carries out the reaction octanoyl-CoA + H2O = octanoate + CoA + H(+). The enzyme catalyses decanoyl-CoA + H2O = decanoate + CoA + H(+). It catalyses the reaction dodecanoyl-CoA + H2O = dodecanoate + CoA + H(+). The catalysed reaction is tetradecanoyl-CoA + H2O = tetradecanoate + CoA + H(+). It carries out the reaction (9Z)-octadecenoyl-CoA + H2O = (9Z)-octadecenoate + CoA + H(+). The enzyme catalyses (5Z,8Z,11Z,14Z)-eicosatetraenoyl-CoA + H2O = (5Z,8Z,11Z,14Z)-eicosatetraenoate + CoA + H(+). Has acyl-CoA thioesterase activity towards medium and long-chain (C14 to C18) fatty acyl-CoA substrates, and probably plays a role in mitochondrial fatty acid metabolism. Plays a role in the apoptotic process, possibly via its regulation of AKT1 activity. According to PubMed:11598301, inhibits AKT1 phosphorylation and activity. According to PubMed:17615157, enhances AKT1 activity by favoring its phosphorylation and translocation to plasma membrane. The chain is Acyl-coenzyme A thioesterase THEM4 (THEM4) from Homo sapiens (Human).